The sequence spans 77 residues: Acyl carrier protein (77 aa).

The Carrier domain maps to 2–77 (SDIADRVKKI…DAVKFISEAA (76 aa)). Residue serine 37 is modified to O-(pantetheine 4'-phosphoryl)serine.

Belongs to the acyl carrier protein (ACP) family. 4'-phosphopantetheine is transferred from CoA to a specific serine of apo-ACP by AcpS. This modification is essential for activity because fatty acids are bound in thioester linkage to the sulfhydryl of the prosthetic group.

The protein localises to the cytoplasm. It participates in lipid metabolism; fatty acid biosynthesis. Functionally, carrier of the growing fatty acid chain in fatty acid biosynthesis. This Cereibacter sphaeroides (strain ATCC 17029 / ATH 2.4.9) (Rhodobacter sphaeroides) protein is Acyl carrier protein.